The chain runs to 152 residues: UPF0178 protein YPTS_2857 (152 aa).

This sequence belongs to the UPF0178 family.

The protein is UPF0178 protein YPTS_2857 of Yersinia pseudotuberculosis serotype IB (strain PB1/+).